Here is a 117-residue protein sequence, read N- to C-terminus: Small ribosomal subunit protein bS6 (117 aa).

Positions Thr97 to Asn117 are disordered.

The protein belongs to the bacterial ribosomal protein bS6 family.

Its function is as follows. Binds together with bS18 to 16S ribosomal RNA. The sequence is that of Small ribosomal subunit protein bS6 from Maricaulis maris (strain MCS10) (Caulobacter maris).